A 113-amino-acid chain; its full sequence is Type III endosome membrane protein TEMP (113 aa).

The interval M1–P22 is disordered. The Extracellular segment spans residues M1 to R29. N5 is a glycosylation site (N-linked (GlcNAc...) asparagine). The helical; Signal-anchor for type III membrane protein transmembrane segment at A30–L50 threads the bilayer. The Cytoplasmic segment spans residues A51–L113. The disordered stretch occupies residues H66–L113. Over residues A81–I90 the composition is skewed to acidic residues.

Its subcellular location is the membrane. It localises to the early endosome. The protein resides in the recycling endosome. It is found in the cell membrane. Functionally, may be involved in membrane trafficking between endosomes and plasma membrane. This is Type III endosome membrane protein TEMP (C1orf210) from Homo sapiens (Human).